The following is a 164-amino-acid chain: Peptidyl-prolyl cis-trans isomerase A (164 aa).

N-acetylmethionine is present on Met-1. Val-2 carries the post-translational modification N-acetylvaline; in Peptidyl-prolyl cis-trans isomerase A, N-terminally processed. A PPIase cyclophilin-type domain is found at 7–163; the sequence is FFDISADGEP…KKITISDCGQ (157 aa). Lys-28 bears the N6-acetyllysine; alternate mark. A Glycyl lysine isopeptide (Lys-Gly) (interchain with G-Cter in SUMO2); alternate cross-link involves residue Lys-28. A Glycyl lysine isopeptide (Lys-Gly) (interchain with G-Cter in ubiquitin); alternate cross-link involves residue Lys-28. Position 44 is an N6-acetyllysine (Lys-44). The residue at position 77 (Ser-77) is a Phosphoserine. Residue Lys-82 is modified to N6-acetyllysine; alternate. Lys-82 participates in a covalent cross-link: Glycyl lysine isopeptide (Lys-Gly) (interchain with G-Cter in SUMO2); alternate. Thr-93 carries the post-translational modification Phosphothreonine. The N-linked (GlcNAc...) asparagine glycan is linked to Asn-108. 3 positions are modified to N6-acetyllysine: Lys-125, Lys-131, and Lys-133.

This sequence belongs to the cyclophilin-type PPIase family. PPIase A subfamily. As to quaternary structure, interacts with protein phosphatase PPP3CA/calcineurin A. Interacts with PRPF19 isoform 2 (via N-terminus). Interacts with isoform 2 of BSG/CD147. Interacts with FOXO1; the interaction promotes FOXO1 dephosphorylation, nuclear accumulation and transcriptional activity. Interacts with integrin ITGA2B:ITGB3; the interaction is ROS and peptidyl-prolyl cis-trans isomerase (PPIase) activity-dependent and is increased in the presence of thrombin. Interacts with MAP3K5. Interacts with TARDBP; the interaction is dependent on the RNA-binding activity of TARDBP and the PPIase activity of PPIA/CYPA and the acetylation of PPIA/CYPA at Lys-125 favors the interaction. Interacts with HNRNPA1, HNRNPA2B1, HNRNPC, RBMX, HNRNPK and HNRNPM. Acetylation at Lys-125 markedly inhibits catalysis of cis to trans isomerization. PPIA acetylation also antagonizes the immunosuppressive effects of cyclosporine by inhibiting the sequential steps of cyclosporine binding and calcineurin inhibition. Acetylation at Lys-125 favors the interaction with TARDBP.

It localises to the cytoplasm. It is found in the secreted. The protein localises to the nucleus. It carries out the reaction [protein]-peptidylproline (omega=180) = [protein]-peptidylproline (omega=0). With respect to regulation, binds cyclosporin A (CsA). CsA mediates some of its effects via an inhibitory action on PPIase. Catalyzes the cis-trans isomerization of proline imidic peptide bonds in oligopeptides. Exerts a strong chemotactic effect on leukocytes partly through activation of one of its membrane receptors BSG/CD147, initiating a signaling cascade that culminates in MAPK/ERK activation. Activates endothelial cells (ECs) in a proinflammatory manner by stimulating activation of NF-kappa-B and ERK, JNK and p38 MAP-kinases and by inducing expression of adhesion molecules including SELE and VCAM1. Induces apoptosis in ECs by promoting the FOXO1-dependent expression of CCL2 and BCL2L11 which are involved in EC chemotaxis and apoptosis. In response to oxidative stress, initiates proapoptotic and antiapoptotic signaling in ECs via activation of NF-kappa-B and AKT1 and up-regulation of antiapoptotic protein BCL2. Negatively regulates MAP3K5/ASK1 kinase activity, autophosphorylation and oxidative stress-induced apoptosis mediated by MAP3K5/ASK1. Necessary for the assembly of TARDBP in heterogeneous nuclear ribonucleoprotein (hnRNP) complexes and regulates TARDBP binding to RNA UG repeats and TARDBP-dependent expression of HDAC6, ATG7 and VCP which are involved in clearance of protein aggregates. Plays an important role in platelet activation and aggregation. Regulates calcium mobilization and integrin ITGA2B:ITGB3 bidirectional signaling via increased ROS production as well as by facilitating the interaction between integrin and the cell cytoskeleton. Binds heparan sulfate glycosaminoglycans. This Cricetulus griseus (Chinese hamster) protein is Peptidyl-prolyl cis-trans isomerase A (PPIA).